A 108-amino-acid polypeptide reads, in one-letter code: uncharacterized protein (108 aa).

The N-terminal stretch at 1–16 is a signal peptide; that stretch reads MKKLILIAIMASGLVA. A lipid anchor (N-palmitoyl cysteine) is attached at cysteine 17. Residue cysteine 17 is the site of S-diacylglycerol cysteine attachment.

Its subcellular location is the cell membrane. This is an uncharacterized protein from Escherichia coli (strain K12).